A 179-amino-acid polypeptide reads, in one-letter code: MNRLKEKYQNEIVSSLTEKFNYPSVMAVPKIEKIVVNMGIGDAVQNAKVLDKAVEELQAITGQKPVITKAKKSIAGFKLREGMPIGAKVTLRGERMYDFLDKLVSVSLPRVRDFRGVSKKAFDGRGNYTLGVREQLIFPEIDYDKVDKVRGMDIVIVTTAKTDEEARELLTQVGMPFQK.

It belongs to the universal ribosomal protein uL5 family. In terms of assembly, part of the 50S ribosomal subunit; part of the 5S rRNA/L5/L18/L25 subcomplex. Contacts the 5S rRNA and the P site tRNA. Forms a bridge to the 30S subunit in the 70S ribosome.

Functionally, this is one of the proteins that bind and probably mediate the attachment of the 5S RNA into the large ribosomal subunit, where it forms part of the central protuberance. In the 70S ribosome it contacts protein S13 of the 30S subunit (bridge B1b), connecting the 2 subunits; this bridge is implicated in subunit movement. Contacts the P site tRNA; the 5S rRNA and some of its associated proteins might help stabilize positioning of ribosome-bound tRNAs. This chain is Large ribosomal subunit protein uL5, found in Shouchella clausii (strain KSM-K16) (Alkalihalobacillus clausii).